The following is a 143-amino-acid chain: UPF0651 protein P31B10.02, mitochondrial (143 aa).

The Oxidoreductase-like domain maps to 48 to 93; it reads IYDGIRVPPKPEEPLNCCQSGCAICVWDVYADDLEEYNRARRKAKR.

This sequence belongs to the UPF0651 family.

It localises to the mitochondrion. This Schizosaccharomyces pombe (strain 972 / ATCC 24843) (Fission yeast) protein is UPF0651 protein P31B10.02, mitochondrial.